We begin with the raw amino-acid sequence, 83 residues long: Large ribosomal subunit protein bL31 (83 aa).

The protein belongs to the bacterial ribosomal protein bL31 family. Type A subfamily. Part of the 50S ribosomal subunit.

In terms of biological role, binds the 23S rRNA. The chain is Large ribosomal subunit protein bL31 from Gloeothece citriformis (strain PCC 7424) (Cyanothece sp. (strain PCC 7424)).